We begin with the raw amino-acid sequence, 368 residues long: Polymerase delta-interacting protein 2 (368 aa).

Residues 1-51 (MAACTARRALAVGSRWWSRSLTGARWPRPLCAAAGAGAFSPASTTTTRRHL) constitute a mitochondrion transit peptide. In terms of domain architecture, ApaG spans 235 to 360 (RETTENIRVT…FSLESNKDEK (126 aa)). Threonine 292 is subject to Phosphothreonine.

As to quaternary structure, interacts with PCNA and POLD2. Interacts with SSBP1. Interacts with PRIMPOL; leading to enhance DNA polymerase activity of PRIMPOL. Interacts with POLH. Interacts with POLD1; leading to stimulate DNA polymerase activity of POLD1.

It is found in the mitochondrion matrix. It localises to the nucleus. Functionally, involved in DNA damage tolerance by regulating translesion synthesis (TLS) of templates carrying DNA damage lesions such as 8oxoG and abasic sites. May act by stimulating activity of DNA polymerases involved in TLS, such as PRIMPOL and polymerase delta (POLD1). The polypeptide is Polymerase delta-interacting protein 2 (Homo sapiens (Human)).